We begin with the raw amino-acid sequence, 132 residues long: Small ribosomal subunit protein uS8c (132 aa).

Belongs to the universal ribosomal protein uS8 family. Part of the 30S ribosomal subunit.

The protein localises to the plastid. Its subcellular location is the chloroplast. Functionally, one of the primary rRNA binding proteins, it binds directly to 16S rRNA central domain where it helps coordinate assembly of the platform of the 30S subunit. In Physcomitrium patens (Spreading-leaved earth moss), this protein is Small ribosomal subunit protein uS8c (rps8).